The primary structure comprises 163 residues: Lipoprotein signal peptidase (163 aa).

3 consecutive transmembrane segments (helical) span residues 11 to 31 (ILIA…IATT), 63 to 83 (KMTF…YFFI), and 88 to 108 (YNLF…GNFI). Catalysis depends on residues Asp-118 and Asp-136. The chain crosses the membrane as a helical span at residues 131–151 (IFNIADSSLTIGVILIIIALL).

This sequence belongs to the peptidase A8 family.

Its subcellular location is the cell membrane. It carries out the reaction Release of signal peptides from bacterial membrane prolipoproteins. Hydrolyzes -Xaa-Yaa-Zaa-|-(S,diacylglyceryl)Cys-, in which Xaa is hydrophobic (preferably Leu), and Yaa (Ala or Ser) and Zaa (Gly or Ala) have small, neutral side chains.. It functions in the pathway protein modification; lipoprotein biosynthesis (signal peptide cleavage). This protein specifically catalyzes the removal of signal peptides from prolipoproteins. This chain is Lipoprotein signal peptidase, found in Staphylococcus aureus.